A 603-amino-acid polypeptide reads, in one-letter code: Beta-glucuronidase (603 aa).

D-glucuronate contacts are provided by aspartate 163 and asparagine 412. Glutamate 413 functions as the Proton donor in the catalytic mechanism. D-glucuronate contacts are provided by asparagine 466, tyrosine 472, glutamate 504, tryptophan 549, and lysine 568. Glutamate 504 functions as the Nucleophile in the catalytic mechanism. The N-K motif motif lies at 566–568; it reads NKK.

Belongs to the glycosyl hydrolase 2 family. In terms of assembly, homotetramer.

It catalyses the reaction a beta-D-glucuronoside + H2O = D-glucuronate + an alcohol. The enzyme catalyses 4-methylumbelliferone beta-D-glucuronate + H2O = 4-methylumbelliferone + D-glucuronate. With respect to regulation, potently inhibited by a set of synthetic compounds like thio-urea derivatives and analogs, and uronic isofagomine (UIFG) derivatives. Inhibitors of gut microbial beta-glucuronidases block the reactivation of glucuronidated cancer drugs, and thereby alleviate drug-induced GI toxicity. Its function is as follows. Displays beta-glucuronidase activity with the artificial substrate p-nitrophenyl-beta-D-glucuronide (PNPG) and with 4-methylumbelliferyl-glucuronide. Is likely capable of scavenging glucuronate from a range of chemically distinct xenobiotic and endobiotic glucuronides present in the gastrointestinal (GI) tract, to be able to utilize these diverse sources of carbon. As part of the GI microbiome, this enzyme is able to reactivate glucuronide drug conjugates, such reactivated compounds can significantly damage the GI tract. In Escherichia coli (strain K12), this protein is Beta-glucuronidase (uidA).